The primary structure comprises 1391 residues: MSLCRCSSICLRRPILRSFNFLNKYIDQSQHSGGLSSFQRLSFSNTGKNESTDDSNQIRCDADKTAADKKKQKQKEEEQAKIREYKRECLKVQKRVLAEEIRCSGEKDRILIQGMMKCLTDGMKKACTKIAKAKLIADKELAVQCAALSKKDKVKALLKKCEREKSKEKECNQNSPAEGDKDRTKKGKTKGKSGGGNKKRSTKENRAKKGKKLVKNRFTQKLEHCIKSEWADVCECRQNFTEDERKRLAASYKCMGTKIKSICRKRVIAEMCEAAGYVKSSEPKKKGKKKKNDEKKEKELEREILKEQAEEEAKIRGVVKEVKKKCKEKALKKKCKDLGRKMKEEAEKKKCAALAKKQKEEDEKKACKELAKKKKEADEKKKCEEAANKEKKAAEKKKCEKAAKERKEAAEKKKCEEAAKKEKEAAERKKCEELAKNIKKAAEKKKCKEAAKKEKEAAERKKCEELAKKIKKAAEKKKCEETAKKGKEVAERKKCEELAKKIKKAEIKKKCKKLAKKEKETAEKKKCEKAAKKRKEAAEKKKCEKAAKKRKEAAEKKKCEKSAKKRKEAAEKKKCEKAAKERKEAAEKKKCEEAAKKEKEVAERKKCEELAKKIKKAAEKKKCKEAAKKEKEAAEREKCGELAKKIKKAAEKKKCKKLAKKEKETAEKKKCEKAAKKRKEAAEKKKCAEAAKKEKEAAEKKKCEEAAKKEKEAAERKKCEELAKKIKKAAEKKKCKKLAKKKKAGEKNKLKKGNKKGKKALKEKKKCRELAKKKAAEKKKCKEAAKKEKEAAEKKKCEKTAKKRKEEAEKKKCEKTAKKRKEAAEKKKCEKAAKKRKEEAEKKKCEKTAKKRKETAEKKKCEKAAKKRKQAAEKKKCEKAAKKRKEAAEKKKCAEAAKKEKELAEKKKCEEAAKKEKEVAERKKCEELAKKIKKAAEKKKCKKLAKKEKKAGEKNKLKKKAGKGKKKCKKLGKKSKRAAEKKKCAEAAKKEKEAATKKKCEERAKKQKEAAEKKQCEERAKKLKEAAEQKQCEERAKKLKEAAEKKQCEERAKKLKEAAEQKQCEERAKKLKEAAEKKQCEERAKKEKEAAEKKQCEERAKKLKEAAEKKQCEERAKKEKEAAEKKRCEEAAKREKEAAEKKKCAEAAKKEKEATEKQKCAEAAKKEKEAAEKKKCAEAAKREKEAAQKKKCADLAKKEQEPAEMKKCEEAAKKEKEAAEKQKCAKAAKKEKEAAEKKKCAEAAKKEQEAAEKKKCAEAAKKEKEAEKKRKCEKAEKAAALKRQCAKLVIRAKEAALRKKCAIIAKKAKMAAEKKECEKLAKKAKEAIEWKKCAKLAKKKREAEKKKCAKLAKKEKEAAEKKKRCKDLAKNKKKGHKKKGRNENRKKRTDC.

2 disordered regions span residues 170-213 and 280-300; these read ECNQ…GKKL and SSEP…EKEL. Positions 184–201 are enriched in basic residues; that stretch reads TKKGKTKGKSGGGNKKRS. The segment covering 291–300 has biased composition (basic and acidic residues); sequence KNDEKKEKEL. 59 consecutive repeat copies span residues 332–347, 348–363, 364–379, 380–395, 396–411, 412–427, 428–443, 444–459, 460–475, 476–491, 492–507, 508–523, 524–539, 540–555, 556–571, 572–587, 588–603, 604–619, 620–635, 636–651, 652–667, 668–683, 684–699, 700–715, 716–731, 732–747, 748–763, 764–779, 780–795, 796–811, 812–827, 828–843, 844–859, 860–875, 876–891, 892–907, 908–923, 924–939, 940–955, 956–971, 972–987, 988–1003, 1004–1019, 1020–1035, 1036–1051, 1052–1067, 1068–1083, 1084–1099, 1100–1115, 1116–1131, 1132–1147, 1148–1163, 1164–1179, 1180–1195, 1196–1211, 1212–1227, 1228–1243, 1244–1259, and 1260–1275. Positions 332–1275 are 59 X 16 AA approximate tandem repeats of [KR]-K-X-C-X-X-X-A-K-X-X-K-X-X-X-E; the sequence is KKKCKDLGRK…AEKKRKCEKA (944 aa). The disordered stretch occupies residues 370–429; that stretch reads LAKKKKEADEKKKCEEAANKEKKAAEKKKCEKAAKERKEAAEKKKCEEAAKKEKEAAERK. Residues 516–577 form a disordered region; sequence KKEKETAEKK…EAAEKKKCEK (62 aa). The span at 517-577 shows a compositional bias: basic and acidic residues; it reads KEKETAEKKK…EAAEKKKCEK (61 aa). Residues 729 to 765 show a composition bias toward basic residues; that stretch reads AAEKKKCKKLAKKKKAGEKNKLKKGNKKGKKALKEKK. 3 disordered regions span residues 729 to 881, 900 to 922, and 934 to 1013; these read AAEK…EKAA, EKEL…VAER, and KAAE…AAEK. Over residues 766 to 881 the composition is skewed to basic and acidic residues; the sequence is KCRELAKKKA…AEKKKCEKAA (116 aa). Composition is skewed to basic residues over residues 934 to 949 and 956 to 976; these read KAAE…KKEK and KLKK…KKSK. The span at 977 to 1013 shows a compositional bias: basic and acidic residues; the sequence is RAAEKKKCAEAAKKEKEAATKKKCEERAKKQKEAAEK. Disordered regions lie at residues 1076-1095 and 1104-1212; these read EKKQ…EKKQ and KEAA…EEAA. The segment covering 1353–1370 has biased composition (basic and acidic residues); sequence KKEKEAAEKKKRCKDLAK. Residues 1353–1391 are disordered; it reads KKEKEAAEKKKRCKDLAKNKKKGHKKKGRNENRKKRTDC. Positions 1371 to 1391 are enriched in basic residues; sequence NKKKGHKKKGRNENRKKRTDC.

Testis. Primary spermatocytes and early spermatids.

The protein resides in the cytoplasm. Its function is as follows. Possible structural role in the sperm tail. The sequence is that of Axoneme-associated protein mst101(2) (mst101(2)) from Drosophila hydei (Fruit fly).